Reading from the N-terminus, the 373-residue chain is Protein RETARDED ROOT GROWTH, mitochondrial (373 aa).

A mitochondrion-targeting transit peptide spans 1–49; the sequence is MGKWRAVAALLLRNQLLNSSKRLNLSSSPCVSKHPTIGLASRFLNFRHF. Residues 346–362 traverse the membrane as a helical segment; sequence EWCIIFLLAIENAIGIY.

Belongs to the RMD1/sif2 family. Predominantly expressed in the root meristem, in the primary and lateral root tips. Also present in leaves and pollen.

It is found in the mitochondrion membrane. Its subcellular location is the mitochondrion. In terms of biological role, required for the maintenance of mitochondrial structure. Positive regulator of cell division and endoreduplication but negative regulator of cell expansion in the postembryonic root meristem, thus leading to the promotion of root growth. In Arabidopsis thaliana (Mouse-ear cress), this protein is Protein RETARDED ROOT GROWTH, mitochondrial.